The chain runs to 223 residues: MPKKFQGENTKSAAARARRAEAKAAADAKKQKEPEDAYWKDDDKHVMRKEQRKEEKEKRRLDQLERKKETQRLLEEEDSKLKGGKAPRVATSSKVTRAQIEDTLRRDHQLREAPDTAEKAKSHLEVPLEENVNRRVLEEGSVEARTIEDAIAVLSVAEEAADRHPERRQRAAFTAFEEAQLPRLKQENPNMRLSQLKQLLKKEWLRSPDNPMNQRAVPFNAPK.

A disordered region spans residues 1 to 126 (MPKKFQGENT…AEKAKSHLEV (126 aa)). 2 stretches are compositionally biased toward basic and acidic residues: residues 18 to 74 (RRAE…QRLL) and 99 to 126 (QIED…HLEV). Positions 44 to 82 (KHVMRKEQRKEEKEKRRLDQLERKKETQRLLEEEDSKLK) form a coiled coil. Phosphoserine is present on residues Ser-141 and Ser-194. Residues 204–223 (WLRSPDNPMNQRAVPFNAPK) form a disordered region.

Belongs to the CCDC124 family. Associates with translationally inactive ribosomes in the nonrotated state. Interacts with RASGEF1B.

The protein resides in the cytoplasm. It is found in the cytoskeleton. It localises to the microtubule organizing center. The protein localises to the centrosome. Its subcellular location is the midbody. Its function is as follows. Ribosome-binding protein involved in ribosome hibernation: associates with translationally inactive ribosomes and stabilizes the nonrotated conformation of the 80S ribosome, thereby promoting ribosome preservation and storage. Also required for proper progression of late cytokinetic stages. The protein is Coiled-coil domain-containing protein 124 (CCDC124) of Pongo abelii (Sumatran orangutan).